We begin with the raw amino-acid sequence, 89 residues long: MGIVMVKLKVMPVSPEVNKDELSAKIKETVESMDIICRNIEVEPLAFGLYAVFPLIEMEEKEGGTEPVEEALANLDDVESVESVEVSLV.

This sequence belongs to the EF-1-beta/EF-1-delta family.

Promotes the exchange of GDP for GTP in EF-1-alpha/GDP, thus allowing the regeneration of EF-1-alpha/GTP that could then be used to form the ternary complex EF-1-alpha/GTP/AAtRNA. This is Elongation factor 1-beta from Methanococcus aeolicus (strain ATCC BAA-1280 / DSM 17508 / OCM 812 / Nankai-3).